The chain runs to 129 residues: Trefoil factor 2 (129 aa).

The signal sequence occupies residues 1 to 23; sequence MGPRGLQLLAVLLALGLCAPAGA. A Pyrrolidone carboxylic acid modification is found at Gln24. 2 P-type domains span residues 29-73 and 79-122; these read CQCS…FHPL and EQCV…FFPI. 7 disulfides stabilise this stretch: Cys29/Cys127, Cys31/Cys58, Cys42/Cys57, Cys52/Cys69, Cys81/Cys107, Cys91/Cys106, and Cys101/Cys118.

Its subcellular location is the secreted. Inhibits gastrointestinal motility and gastric acid secretion. Could function as a structural component of gastric mucus, possibly by stabilizing glycoproteins in the mucus gel through interactions with carbohydrate side chains. This Canis lupus familiaris (Dog) protein is Trefoil factor 2 (TFF2).